Consider the following 523-residue polypeptide: Peptide chain release factor 3 (523 aa).

A tr-type G domain is found at 10–277 (NKRRTFAIIS…QFVDLAPAPG (268 aa)). GTP-binding positions include 19–26 (SHPDAGKT), 87–91 (DTPGH), and 141–144 (NKLD).

It belongs to the TRAFAC class translation factor GTPase superfamily. Classic translation factor GTPase family. PrfC subfamily.

It is found in the cytoplasm. In terms of biological role, increases the formation of ribosomal termination complexes and stimulates activities of RF-1 and RF-2. It binds guanine nucleotides and has strong preference for UGA stop codons. It may interact directly with the ribosome. The stimulation of RF-1 and RF-2 is significantly reduced by GTP and GDP, but not by GMP. The protein is Peptide chain release factor 3 of Lactobacillus delbrueckii subsp. bulgaricus (strain ATCC BAA-365 / Lb-18).